The chain runs to 627 residues: CTP synthase (627 aa).

The Glutamine amidotransferase type-1 domain occupies 300–554 (CIAVVGKYTK…LASVDRLNQY (255 aa)). Residues C399, H526, and E528 each act as for GATase activity in the active site. 4 positions are modified to phosphoserine: S567, S570, S571, and S588. T595 bears the Phosphothreonine mark. Positions 599-613 (GISKSCNGSISTSDS) are enriched in polar residues. The disordered stretch occupies residues 599–627 (GISKSCNGSISTSDSEGACGGVDPTNGHK).

The protein belongs to the CTP synthase family. In ovary, expressed in oocytes, follicle cells and nurse cells. Also expressed in larval and adult testis (at protein level). In larvae, expressed in lymph gland, salivary gland, regions of the midgut, testis, optical lobe and trachea. Isoform 1 is expressed in adult testis, ovary, accessory gland and head. Isoform 2 is weakly expressed in ovary.

The protein resides in the cytoplasm. It carries out the reaction UTP + L-glutamine + ATP + H2O = CTP + L-glutamate + ADP + phosphate + 2 H(+). It participates in pyrimidine metabolism; CTP biosynthesis via de novo pathway; CTP from UDP: step 2/2. Functionally, catalyzes the ATP-dependent amination of UTP to CTP with either L-glutamine or ammonia as the source of nitrogen. Constitutes the rate-limiting enzyme in the synthesis of cytosine nucleotides. Its function is as follows. Required for assembly of cytoophidium in female germline cells. In nurse cells, CTPsyn filament assembly in the cytoophidium is regulated by Ack kinase which may thereby contribute to the control of CTP production at specific stages of oogenesis and development of the nurse cell membrane. In Drosophila melanogaster (Fruit fly), this protein is CTP synthase.